The following is a 35-amino-acid chain: Cytochrome b6-f complex subunit 5 (35 aa).

The helical transmembrane segment at 5–25 (LLCGIVLGLIPVTLTGLFVAA) threads the bilayer.

The protein belongs to the PetG family. As to quaternary structure, the 4 large subunits of the cytochrome b6-f complex are cytochrome b6, subunit IV (17 kDa polypeptide, PetD), cytochrome f and the Rieske protein, while the 4 small subunits are PetG, PetL, PetM and PetN. The complex functions as a dimer.

It localises to the plastid. The protein localises to the organellar chromatophore thylakoid membrane. In terms of biological role, component of the cytochrome b6-f complex, which mediates electron transfer between photosystem II (PSII) and photosystem I (PSI), cyclic electron flow around PSI, and state transitions. PetG is required for either the stability or assembly of the cytochrome b6-f complex. In Paulinella chromatophora, this protein is Cytochrome b6-f complex subunit 5.